The following is a 418-amino-acid chain: Odorant receptor 13a (418 aa).

The Cytoplasmic portion of the chain corresponds to 1 to 38 (MFYSYPYKALSFPIQCVWLKLNGSWPLTESSRPWRSQS). The chain crosses the membrane as a helical span at residues 39 to 59 (LLATAYIVWAWYVIASVGITI). The Extracellular portion of the chain corresponds to 60–70 (SYQTAFLLNNL). A glycan (N-linked (GlcNAc...) asparagine) is linked at Asn69. A helical membrane pass occupies residues 71–91 (SDIIITTENCCTTFMGVLNFV). Residues 92 to 140 (RLIHLRLNQRKFRQLIENFSYEIWIPNSSKNNVAAECRRRMVTFSIMTS) lie on the Cytoplasmic side of the membrane. The helical transmembrane segment at 141-161 (LLACLIIMYCVLPLVEIFFGP) threads the bilayer. Over 162–195 (AFDAQNKPFPYKMIFPYDAQSSWIRYVMTYIFTS) the chain is Extracellular. Residues 196–216 (YAGICVVTTLFAEDTILGFFI) traverse the membrane as a helical segment. At 217-273 (TYTCGQFHLLHQRIAGLFAGSNAELAESIQLERLKRIVEKHNNIISFAKRLEDFFNP) the chain is on the cytoplasmic side. The helical transmembrane segment at 274 to 294 (ILLANLMISSVLICMVGFQIV) threads the bilayer. Residues 295–299 (TGKNM) are Extracellular-facing. Residues 300 to 320 (FIGDYVKFIIYISSALSQLYV) form a helical membrane-spanning segment. The Cytoplasmic segment spans residues 321–385 (LCENGDALIK…PVRITAFKFS (65 aa)). Residues 386–406 (TLSLQSFTAILSTSISYFTLL) form a helical membrane-spanning segment. The Extracellular segment spans residues 407–418 (RSVYFDDEKKLD).

This sequence belongs to the insect chemoreceptor superfamily. Heteromeric odorant receptor channel (TC 1.A.69) family. Or1a subfamily. Interacts with Orco. Complexes exist early in the endomembrane system in olfactory sensory neurons (OSNs), coupling these complexes to the conserved ciliary trafficking pathway. In terms of tissue distribution, expressed in olfactory sensory neurons in the antenna.

The protein localises to the cell membrane. Odorant receptor which mediates acceptance or avoidance behavior, depending on its substrates. The odorant receptor repertoire encodes a large collection of odor stimuli that vary widely in identity, intensity, and duration. May form a complex with Orco to form odorant-sensing units, providing sensitive and prolonged odorant signaling and calcium permeability. Involved in the behavioral responses to octanol, nonanol, and pentyl acetate. The sequence is that of Odorant receptor 13a (Or13a) from Drosophila melanogaster (Fruit fly).